Here is a 133-residue protein sequence, read N- to C-terminus: Large-conductance mechanosensitive channel (133 aa).

Helical transmembrane passes span 10-30 and 76-96; these read FAVKGNVMDMAVGVIIGGAFG and GAFIQNIFDFLIIAIAVFSMV.

It belongs to the MscL family. As to quaternary structure, homopentamer.

It is found in the cell inner membrane. Channel that opens in response to stretch forces in the membrane lipid bilayer. May participate in the regulation of osmotic pressure changes within the cell. In Haemophilus ducreyi (strain 35000HP / ATCC 700724), this protein is Large-conductance mechanosensitive channel.